A 432-amino-acid chain; its full sequence is MVRLLASEVQQLLHNKFVVVLGDSVHRAVYKDLVLLLQKDCLLTNKQLRTKGELSFEKDQLMMGGELDTLHNRTDYREVREFCSDHHLVRFYFLTRVYSEYMESVLKELQSGNHAPDVIIMNSCLWDVSRYGRNSLSSYRQNLENLFGRMDEVLPKSCLLVWNTAMPLGDKIKAAFLPQKCKGQYPRISVATLKKKVTQANFYSHAEATKHYFDVLDLNFHFRQARKHLQGDGVHWNEHAHRKLSYLLLAHMADAWGVELPHRDPWEPGFEAWESSGQVEERQPQDNIGPQFAQSPPYPFPRPPPLLPSPGLPIRPPPLLGCPLPPPQPMPPLPLYPQVSYFSSDPVFQSDEFYIHSDSPSSNHTGYAFEGDFSFYPQPPMPNFRPPCHQRQAPVVHRGFPRHFPRGPYMPWRERPRRPQKHAPACLESRPQ.

Disordered regions lie at residues 273–312 (WESSGQVEERQPQDNIGPQFAQSPPYPFPRPPPLLPSPGL) and 407–432 (GPYMPWRERPRRPQKHAPACLESRPQ). Polar residues predominate over residues 285–294 (QDNIGPQFAQ). Over residues 296–312 (PPYPFPRPPPLLPSPGL) the composition is skewed to pro residues.

Belongs to the PC-esterase family.

This Rattus norvegicus (Rat) protein is PC-esterase domain-containing protein 1B (Pced1b).